The sequence spans 466 residues: Alpha-1A adrenergic receptor (466 aa).

Residues 1–27 are Extracellular-facing; sequence MVLLSENASEGSNCTHPPAQVNISKAI. 3 N-linked (GlcNAc...) asparagine glycosylation sites follow: Asn7, Asn13, and Asn22. Residues 28–51 form a helical membrane-spanning segment; sequence LLGVILGGLIIFGVLGNILVILSV. The Cytoplasmic segment spans residues 52 to 64; that stretch reads ACHRHLHSVTHYY. Residues 65-88 traverse the membrane as a helical segment; the sequence is IVNLAVADLLLTSTVLPFSAIFEI. Topologically, residues 89 to 99 are extracellular; sequence LGYWAFGRVFC. Cysteines 99 and 176 form a disulfide. The helical transmembrane segment at 100-122 threads the bilayer; that stretch reads NIWAAVDVLCCTASIMGLCIISI. Topologically, residues 123–143 are cytoplasmic; sequence DRYIGVSYPLRYPTIVTQRRG. Residues 144–167 traverse the membrane as a helical segment; it reads VRALLCVWALSLVISIGPLFGWRQ. The Extracellular segment spans residues 168-181; that stretch reads QAPEDETICQINEE. The chain crosses the membrane as a helical span at residues 182 to 205; that stretch reads PGYVLFSALGSFYVPLTIILVMYC. Over 206 to 273 the chain is Cytoplasmic; sequence RVYVVAKRES…FSREKKAAKT (68 aa). At Ser215 the chain carries Phosphoserine; by PKA. Residues 274–297 form a helical membrane-spanning segment; sequence LGIVVGCFVLCWLPFFLVMPIGSF. Residues 298–305 lie on the Extracellular side of the membrane; it reads FPNFKPPE. The chain crosses the membrane as a helical span at residues 306-329; sequence TVFKIVFWLGYLNSCINPIIYPCS. The Cytoplasmic portion of the chain corresponds to 330–466; the sequence is SQEFKKAFQN…ISLGENGEEV (137 aa). A Nuclear localization signal motif is present at residues 334–349; the sequence is KKAFQNVLRIQCLRRR. Cys345 carries S-palmitoyl cysteine lipidation.

It belongs to the G-protein coupled receptor 1 family. Adrenergic receptor subfamily. ADRA1A sub-subfamily. In terms of assembly, homo- and heterooligomer. Heterooligomerizes with ADRA1B homooligomers in cardiac myocytes. Interacts with CAVIN4.

It is found in the nucleus membrane. It localises to the cell membrane. The protein localises to the cytoplasm. Its subcellular location is the membrane. The protein resides in the caveola. Its function is as follows. This alpha-adrenergic receptor mediates its action by association with G proteins that activate a phosphatidylinositol-calcium second messenger system. Its effect is mediated by G(q) and G(11) proteins. Nuclear ADRA1A-ADRA1B heterooligomers regulate phenylephrine (PE)-stimulated ERK signaling in cardiac myocytes. The chain is Alpha-1A adrenergic receptor (Adra1a) from Mus musculus (Mouse).